The sequence spans 212 residues: Protein-L-isoaspartate O-methyltransferase (212 aa).

Serine 60 is an active-site residue.

Belongs to the methyltransferase superfamily. L-isoaspartyl/D-aspartyl protein methyltransferase family.

Its subcellular location is the cytoplasm. The enzyme catalyses [protein]-L-isoaspartate + S-adenosyl-L-methionine = [protein]-L-isoaspartate alpha-methyl ester + S-adenosyl-L-homocysteine. Catalyzes the methyl esterification of L-isoaspartyl residues in peptides and proteins that result from spontaneous decomposition of normal L-aspartyl and L-asparaginyl residues. It plays a role in the repair and/or degradation of damaged proteins. This is Protein-L-isoaspartate O-methyltransferase from Methylorubrum populi (strain ATCC BAA-705 / NCIMB 13946 / BJ001) (Methylobacterium populi).